The primary structure comprises 478 residues: Cytochrome c-552 (478 aa).

A signal peptide spans 1–26 (MTRIKINARRIFSLLIPFFFFTSVHA). His94 contacts heme c. Residues Cys122, Cys125, and Lys126 each contribute to the heme site. Heme c is bound by residues Cys160, Cys163, His164, Cys209, Cys212, and His213. 4 residues coordinate Ca(2+): Glu215, Tyr216, Lys261, and Gln263. Tyr216 is a substrate binding site. A substrate-binding site is contributed by His264. Positions 275, 282, 285, 286, 301, 314, 317, 318, and 393 each coordinate heme c.

Belongs to the cytochrome c-552 family. The cofactor is Ca(2+). Heme c serves as cofactor.

It localises to the periplasm. The catalysed reaction is 6 Fe(III)-[cytochrome c] + NH4(+) + 2 H2O = 6 Fe(II)-[cytochrome c] + nitrite + 8 H(+). It functions in the pathway nitrogen metabolism; nitrate reduction (assimilation). Its function is as follows. Catalyzes the reduction of nitrite to ammonia, consuming six electrons in the process. The protein is Cytochrome c-552 of Escherichia coli O6:H1 (strain CFT073 / ATCC 700928 / UPEC).